The primary structure comprises 224 residues: Oxygen-evolving enhancer protein 3-1, chloroplastic (224 aa).

The transit peptide at Met1–Arg44 directs the protein to the chloroplast. The N-terminal 31 residues, Ala45–Ala75, are a transit peptide targeting the thylakoid. Thr189 carries the post-translational modification Phosphothreonine. Residue Tyr209 is modified to Phosphotyrosine. A Phosphothreonine modification is found at Thr212.

The protein belongs to the PsbQ family. In terms of tissue distribution, expressed in green tissue, with high steady-state mRNA levels in leaves. Not expressed in roots.

It localises to the plastid. Its subcellular location is the chloroplast thylakoid membrane. Its function is as follows. Required for photosystem II assembly/stability and photoautotrophic growth under low light conditions. This chain is Oxygen-evolving enhancer protein 3-1, chloroplastic (PSBQ1), found in Arabidopsis thaliana (Mouse-ear cress).